A 284-amino-acid polypeptide reads, in one-letter code: MQPTPTQRPEAIVHDEKAQLDFARDMSYGDYLHLDELLGAQHPLSPEHNEMLFIVQHQTSELWMKLMLHELRAAIAAIQQDRLQPAFKMLARVSKILEQLVSAWDVLATMTPPEYSALRPYLAHSSGFQSYQYRQIEYLLGNKNAAMLQPHAHRADLLAQVRAAFEAPSLYDEALRFLARSGLAVPAGALQRDWTQPYRADDQVEQAWLTVYRQSERYWNQYQLGEKLTDLEDAFRLWRFRHVTTVERIIGFKRGTGGTSGVTYLRKMLEVVLFPEIWKLRTDL.

Substrate is bound by residues 53–57 (FIVQH), Tyr-115, and Arg-119. His-242 provides a ligand contact to heme. Residue Thr-256 coordinates substrate.

It belongs to the tryptophan 2,3-dioxygenase family. As to quaternary structure, homotetramer. It depends on heme as a cofactor.

It catalyses the reaction L-tryptophan + O2 = N-formyl-L-kynurenine. It functions in the pathway amino-acid degradation; L-tryptophan degradation via kynurenine pathway; L-kynurenine from L-tryptophan: step 1/2. In terms of biological role, heme-dependent dioxygenase that catalyzes the oxidative cleavage of the L-tryptophan (L-Trp) pyrrole ring and converts L-tryptophan to N-formyl-L-kynurenine. Catalyzes the oxidative cleavage of the indole moiety. The polypeptide is Tryptophan 2,3-dioxygenase (Bordetella pertussis (strain Tohama I / ATCC BAA-589 / NCTC 13251)).